The primary structure comprises 114 residues: Protein vCCL3 (114 aa).

An N-terminal signal peptide occupies residues 1–26; the sequence is MWSMCWVLRAHLGLLFWVAVIELCAA.

In terms of biological role, acts as a highly selective agonist for human lymphoactin receptor XCR1. This is Protein vCCL3 (K4.1) from Human herpesvirus 8 type P (isolate GK18) (HHV-8).